The following is a 273-amino-acid chain: Thiazole synthase (273 aa).

The Schiff-base intermediate with DXP role is filled by Lys111. 1-deoxy-D-xylulose 5-phosphate is bound by residues Gly172, 198–199 (AG), and 220–221 (NS). The tract at residues 251–273 (RLPRRGQASASSPTTGLISGKDK) is disordered. Polar residues predominate over residues 258 to 267 (ASASSPTTGL).

This sequence belongs to the ThiG family. In terms of assembly, homotetramer. Forms heterodimers with either ThiH or ThiS.

The protein resides in the cytoplasm. The enzyme catalyses [ThiS sulfur-carrier protein]-C-terminal-Gly-aminoethanethioate + 2-iminoacetate + 1-deoxy-D-xylulose 5-phosphate = [ThiS sulfur-carrier protein]-C-terminal Gly-Gly + 2-[(2R,5Z)-2-carboxy-4-methylthiazol-5(2H)-ylidene]ethyl phosphate + 2 H2O + H(+). It functions in the pathway cofactor biosynthesis; thiamine diphosphate biosynthesis. Functionally, catalyzes the rearrangement of 1-deoxy-D-xylulose 5-phosphate (DXP) to produce the thiazole phosphate moiety of thiamine. Sulfur is provided by the thiocarboxylate moiety of the carrier protein ThiS. In vitro, sulfur can be provided by H(2)S. This Synechococcus sp. (strain CC9902) protein is Thiazole synthase.